A 422-amino-acid chain; its full sequence is UDP-N-acetylglucosamine 1-carboxyvinyltransferase (422 aa).

Position 24–25 (lysine 24–asparagine 25) interacts with phosphoenolpyruvate. Arginine 93 serves as a coordination point for UDP-N-acetyl-alpha-D-glucosamine. Residue cysteine 117 is the Proton donor of the active site. Cysteine 117 bears the 2-(S-cysteinyl)pyruvic acid O-phosphothioketal mark. UDP-N-acetyl-alpha-D-glucosamine contacts are provided by residues arginine 122–leucine 126, lysine 162–valine 165, aspartate 307, and isoleucine 329.

The protein belongs to the EPSP synthase family. MurA subfamily.

It localises to the cytoplasm. The enzyme catalyses phosphoenolpyruvate + UDP-N-acetyl-alpha-D-glucosamine = UDP-N-acetyl-3-O-(1-carboxyvinyl)-alpha-D-glucosamine + phosphate. Its pathway is cell wall biogenesis; peptidoglycan biosynthesis. Functionally, cell wall formation. Adds enolpyruvyl to UDP-N-acetylglucosamine. The sequence is that of UDP-N-acetylglucosamine 1-carboxyvinyltransferase from Vibrio atlanticus (strain LGP32) (Vibrio splendidus (strain Mel32)).